We begin with the raw amino-acid sequence, 201 residues long: UPF0301 protein Avi_1069 (201 aa).

It belongs to the UPF0301 (AlgH) family.

This Allorhizobium ampelinum (strain ATCC BAA-846 / DSM 112012 / S4) (Agrobacterium vitis (strain S4)) protein is UPF0301 protein Avi_1069.